The primary structure comprises 620 residues: Glutathione-regulated potassium-efflux system protein KefC (620 aa).

A run of 12 helical transmembrane segments spans residues 4 to 24 (HTLI…PIAV), 26 to 46 (LGLG…PWGL), 54 to 74 (SILH…GLEL), 90 to 110 (GALQ…LLGL), 114 to 134 (VAEL…MQAM), 149 to 169 (FAVL…IPLL), 178 to 198 (MGAF…VVLL), 218 to 238 (VFSA…EEVG), 270 to 290 (GLLL…GTLI), 294 to 314 (LRIV…LWLI), 327 to 347 (WFAV…GAAQ), and 359 to 379 (SLTL…VILN). The 120-residue stretch at 399–518 (QPRVIIAGFG…AGVEKPERET (120 aa)) folds into the RCK N-terminal domain. The interval 597–620 (GWQGTEEGKHTGNMADEPETKPSS) is disordered.

The protein belongs to the monovalent cation:proton antiporter 2 (CPA2) transporter (TC 2.A.37) family. KefC subfamily. As to quaternary structure, homodimer. Interacts with the regulatory subunit KefF.

Its subcellular location is the cell inner membrane. Functionally, pore-forming subunit of a potassium efflux system that confers protection against electrophiles. Catalyzes K(+)/H(+) antiport. The protein is Glutathione-regulated potassium-efflux system protein KefC of Escherichia coli O45:K1 (strain S88 / ExPEC).